The following is a 357-amino-acid chain: Golgi to ER traffic protein 2 (357 aa).

Over 1 to 224 (MSETTDKQLT…AKYHTYQEQL (224 aa)) the chain is Cytoplasmic. Low complexity predominate over residues 65 to 81 (TDTATVTDSSTNATSVS). A disordered region spans residues 65 to 99 (TDTATVTDSSTNATSVSPSAAKATPTSTGVSSAIS). The span at 88 to 98 (TPTSTGVSSAI) shows a compositional bias: polar residues. Residues 225-245 (WQFRFLVVRILATIFNFAYHF) traverse the membrane as a helical segment. The Lumenal portion of the chain corresponds to 246–270 (ITIPSFTASNHAYVRDLSEVYPLLG). The helical transmembrane segment at 271-290 (FMTIFTSIEVVIIATYYLLF) threads the bilayer. The Cytoplasmic segment spans residues 291–334 (TKLGLFHASNQKSFILKGISTLSMFVPQLLRYEPLVATFLGYKE). The chain crosses the membrane as a helical span at residues 335–355 (LLGIFVGDLSLVVVMFGLLSF). Residues 356–357 (SN) lie on the Lumenal side of the membrane.

It belongs to the GET2 family. As to quaternary structure, component of the Golgi to ER traffic (GET) complex, which is composed of GET1, GET2 and GET3. Within the complex, GET1 and GET2 form a heterotetramer which is stabilized by phosphatidylinositol binding and which binds to the GET3 homodimer.

It localises to the endoplasmic reticulum membrane. The protein localises to the golgi apparatus membrane. Required for the post-translational delivery of tail-anchored (TA) proteins to the endoplasmic reticulum. Together with GET1, acts as a membrane receptor for soluble GET3, which recognizes and selectively binds the transmembrane domain of TA proteins in the cytosol. The GET complex cooperates with the HDEL receptor ERD2 to mediate the ATP-dependent retrieval of resident ER proteins that contain a C-terminal H-D-E-L retention signal from the Golgi to the ER. This is Golgi to ER traffic protein 2 from Lodderomyces elongisporus (strain ATCC 11503 / CBS 2605 / JCM 1781 / NBRC 1676 / NRRL YB-4239) (Yeast).